Here is a 51-residue protein sequence, read N- to C-terminus: Cytochrome bd ubiquinol oxidase subunit X (51 aa).

Over 1–3 (MWY) the chain is Cytoplasmic. Residues 4-26 (FSWLLGLPLAAAFAVLNAMWYEL) traverse the membrane as a helical segment. At 27–51 (MDDRARKRLAADPTAELALEGNKHH) the chain is on the periplasmic side.

It belongs to the cytochrome ubiquinol oxidase subunit X family. May be a subunit of cytochrome ubiquinol oxidase.

It is found in the cell inner membrane. It catalyses the reaction 2 a ubiquinol + O2(in) + 4 H(+)(in) = 2 a ubiquinone + 2 H2O(in) + 4 H(+)(out). It functions in the pathway energy metabolism; oxidative phosphorylation. Functionally, required for correct functioning of cytochrome bd oxidase. The sequence is that of Cytochrome bd ubiquinol oxidase subunit X (cydX) from Brucella abortus (strain 2308).